A 610-amino-acid polypeptide reads, in one-letter code: UvrABC system protein C (610 aa).

The 79-residue stretch at 16-94 (SQPGVYRMYD…IKLYQPRYNV (79 aa)) folds into the GIY-YIG domain. A UVR domain is found at 204 to 239 (DQVLNQLVARMEQASGDLRFEEAGRLRDQIQAVRRV).

It belongs to the UvrC family. In terms of assembly, interacts with UvrB in an incision complex.

The protein resides in the cytoplasm. Its function is as follows. The UvrABC repair system catalyzes the recognition and processing of DNA lesions. UvrC both incises the 5' and 3' sides of the lesion. The N-terminal half is responsible for the 3' incision and the C-terminal half is responsible for the 5' incision. The polypeptide is UvrABC system protein C (Erwinia tasmaniensis (strain DSM 17950 / CFBP 7177 / CIP 109463 / NCPPB 4357 / Et1/99)).